Reading from the N-terminus, the 521-residue chain is Exodeoxyribonuclease 7 large subunit (521 aa).

The segment at 494-521 (ATSGAARPKPAAKPSTKAKEPGNQGSLF) is disordered. Over residues 498-508 (AARPKPAAKPS) the composition is skewed to low complexity.

It belongs to the XseA family. As to quaternary structure, heterooligomer composed of large and small subunits.

The protein resides in the cytoplasm. It catalyses the reaction Exonucleolytic cleavage in either 5'- to 3'- or 3'- to 5'-direction to yield nucleoside 5'-phosphates.. Functionally, bidirectionally degrades single-stranded DNA into large acid-insoluble oligonucleotides, which are then degraded further into small acid-soluble oligonucleotides. The chain is Exodeoxyribonuclease 7 large subunit from Mesorhizobium japonicum (strain LMG 29417 / CECT 9101 / MAFF 303099) (Mesorhizobium loti (strain MAFF 303099)).